The chain runs to 610 residues: tRNA uridine 5-carboxymethylaminomethyl modification enzyme MnmG (610 aa).

G14–G19 contacts FAD. Residue G274–F288 coordinates NAD(+).

It belongs to the MnmG family. As to quaternary structure, homodimer. Heterotetramer of two MnmE and two MnmG subunits. It depends on FAD as a cofactor.

The protein localises to the cytoplasm. NAD-binding protein involved in the addition of a carboxymethylaminomethyl (cmnm) group at the wobble position (U34) of certain tRNAs, forming tRNA-cmnm(5)s(2)U34. This is tRNA uridine 5-carboxymethylaminomethyl modification enzyme MnmG from Chlamydia trachomatis serovar L2b (strain UCH-1/proctitis).